The primary structure comprises 137 residues: Large ribosomal subunit protein eL28 (137 aa).

Residue Ser-2 is modified to N-acetylserine. Residues Lys-58 and Lys-65 each participate in a glycyl lysine isopeptide (Lys-Gly) (interchain with G-Cter in SUMO2) cross-link. The residue at position 115 (Ser-115) is a Phosphoserine.

The protein belongs to the eukaryotic ribosomal protein eL28 family. In terms of assembly, component of the large ribosomal subunit.

The protein resides in the cytoplasm. Its function is as follows. Component of the large ribosomal subunit. The ribosome is a large ribonucleoprotein complex responsible for the synthesis of proteins in the cell. The sequence is that of Large ribosomal subunit protein eL28 (Rpl28) from Rattus norvegicus (Rat).